Reading from the N-terminus, the 102-residue chain is Ribosomal silencing factor RsfS (102 aa).

It belongs to the Iojap/RsfS family. In terms of assembly, interacts with ribosomal protein uL14 (rplN).

The protein resides in the cytoplasm. Functions as a ribosomal silencing factor. Interacts with ribosomal protein uL14 (rplN), blocking formation of intersubunit bridge B8. Prevents association of the 30S and 50S ribosomal subunits and the formation of functional ribosomes, thus repressing translation. The polypeptide is Ribosomal silencing factor RsfS (Haemophilus influenzae (strain ATCC 51907 / DSM 11121 / KW20 / Rd)).